Here is a 601-residue protein sequence, read N- to C-terminus: Elongation factor 4 (601 aa).

The 183-residue stretch at 7 to 189 (DNIRNFSIVA…AIVKRLPPPK (183 aa)) folds into the tr-type G domain. Residues 19–24 (DHGKST) and 136–139 (NKVD) each bind GTP.

The protein belongs to the TRAFAC class translation factor GTPase superfamily. Classic translation factor GTPase family. LepA subfamily.

The protein localises to the cell inner membrane. It catalyses the reaction GTP + H2O = GDP + phosphate + H(+). Its function is as follows. Required for accurate and efficient protein synthesis under certain stress conditions. May act as a fidelity factor of the translation reaction, by catalyzing a one-codon backward translocation of tRNAs on improperly translocated ribosomes. Back-translocation proceeds from a post-translocation (POST) complex to a pre-translocation (PRE) complex, thus giving elongation factor G a second chance to translocate the tRNAs correctly. Binds to ribosomes in a GTP-dependent manner. The chain is Elongation factor 4 from Methylorubrum populi (strain ATCC BAA-705 / NCIMB 13946 / BJ001) (Methylobacterium populi).